We begin with the raw amino-acid sequence, 236 residues long: Alpha-tubulin N-acetyltransferase (236 aa).

Residues alanine 21 to phenylalanine 201 enclose the N-acetyltransferase domain. Acetyl-CoA-binding positions include phenylalanine 134–lysine 147 and serine 171–lysine 180. The disordered stretch occupies residues serine 217–glycine 236. Residues threonine 219–lysine 229 show a composition bias toward low complexity.

It belongs to the acetyltransferase ATAT1 family.

It carries out the reaction L-lysyl-[alpha-tubulin] + acetyl-CoA = N(6)-acetyl-L-lysyl-[alpha-tubulin] + CoA + H(+). Functionally, specifically acetylates 'Lys-40' in alpha-tubulin on the lumenal side of microtubules. Promotes microtubule destabilization and accelerates microtubule dynamics; this activity may be independent of acetylation activity. Acetylates alpha-tubulin with a slow enzymatic rate, due to a catalytic site that is not optimized for acetyl transfer. Enters the microtubule through each end and diffuses quickly throughout the lumen of microtubules. Acetylates only long/old microtubules because of its slow acetylation rate since it does not have time to act on dynamically unstable microtubules before the enzyme is released. This Leishmania braziliensis protein is Alpha-tubulin N-acetyltransferase.